We begin with the raw amino-acid sequence, 370 residues long: Phosphate-binding protein PstS 3 (370 aa).

A signal peptide spans 1-22 (MKLNRFGAAVGVLAAGALVLSA). Cys23 carries the N-palmitoyl cysteine lipid modification. Cys23 is lipidated: S-diacylglycerol cysteine. Phosphate-binding positions include 56-58 (STA), Ser86, Asp104, and 191-193 (SGT).

This sequence belongs to the PstS family. In terms of assembly, the complex is composed of two ATP-binding proteins (PstB), two transmembrane proteins (PstC and PstA) and a solute-binding protein (PstS).

It is found in the cell membrane. Its function is as follows. Part of the ABC transporter complex PstSACB involved in phosphate import. This is Phosphate-binding protein PstS 3 (pstS3) from Mycobacterium bovis (strain ATCC BAA-935 / AF2122/97).